Here is a 548-residue protein sequence, read N- to C-terminus: Membrane protein insertase YidC (548 aa).

Residues 6–26 (NLLVIALLFVSFMIWQAWEQD) form a helical membrane-spanning segment. The interval 28 to 54 (NPQPQTQQTTQTTTTAAGSAADQGVPA) is disordered. Residues 29–42 (PQPQTQQTTQTTTT) are compositionally biased toward low complexity. Helical transmembrane passes span 350-370 (FVGNWGFSIIIITFIVRGIMY), 424-444 (FPLIIQMPIFLALYYMLMGSI), 458-478 (LSAQDPYYILPILMGVTMFFI), and 499-519 (PVIFTVFFLWFPSGLVLYYIV).

Belongs to the OXA1/ALB3/YidC family. Type 1 subfamily. Interacts with the Sec translocase complex via SecD. Specifically interacts with transmembrane segments of nascent integral membrane proteins during membrane integration.

Its subcellular location is the cell inner membrane. In terms of biological role, required for the insertion and/or proper folding and/or complex formation of integral membrane proteins into the membrane. Involved in integration of membrane proteins that insert both dependently and independently of the Sec translocase complex, as well as at least some lipoproteins. Aids folding of multispanning membrane proteins. This is Membrane protein insertase YidC from Salmonella arizonae (strain ATCC BAA-731 / CDC346-86 / RSK2980).